The sequence spans 354 residues: DNA integrity scanning protein DisA (354 aa).

In terms of domain architecture, DAC spans E6 to S144. ATP is bound by residues G73, L91, and T104 to T108.

Belongs to the DisA family. Homooctamer. Mg(2+) is required as a cofactor.

The catalysed reaction is 2 ATP = 3',3'-c-di-AMP + 2 diphosphate. Its function is as follows. Participates in a DNA-damage check-point that is active prior to asymmetric division when DNA is damaged. DisA forms globular foci that rapidly scan along the chromosomes during sporulation, searching for lesions. When a lesion is present, DisA pauses at the lesion site. This triggers a cellular response that culminates in a temporary block in sporulation initiation. In terms of biological role, also has diadenylate cyclase activity, catalyzing the condensation of 2 ATP molecules into cyclic di-AMP (c-di-AMP). c-di-AMP acts as a signaling molecule that couples DNA integrity with progression of sporulation. The rise in c-di-AMP level generated by DisA while scanning the chromosome, operates as a positive signal that advances sporulation; upon encountering a lesion, the DisA focus arrests at the damaged site and halts c-di-AMP synthesis. The sequence is that of DNA integrity scanning protein DisA from Clostridium kluyveri (strain ATCC 8527 / DSM 555 / NBRC 12016 / NCIMB 10680 / K1).